The sequence spans 1059 residues: Carbamoyl phosphate synthase large chain (1059 aa).

A carboxyphosphate synthetic domain region spans residues 1–401; sequence MPKRKDIQKI…SLLKACRSLE (401 aa). Positions 129, 169, 175, 176, 208, 210, 215, 241, 242, 243, 284, and 298 each coordinate ATP. Residues 133–327 form the ATP-grasp 1 domain; it reads KQLMEELGQP…IAKLAAKIAV (195 aa). 3 residues coordinate Mg(2+): Gln-284, Glu-298, and Asn-300. Residues Gln-284, Glu-298, and Asn-300 each contribute to the Mn(2+) site. Residues 402 to 546 are oligomerization domain; that stretch reads VCVDHNELPA…YSTYGFENES (145 aa). A carbamoyl phosphate synthetic domain region spans residues 547–929; that stretch reads VKSSKESVLV…ALYKAFEASY (383 aa). Residues 671 to 861 form the ATP-grasp 2 domain; it reads EQALKELDIP…MAQVATRLIL (191 aa). Residues Arg-707, Ser-746, Ile-748, Glu-752, Gly-777, Val-778, His-779, Ser-780, Gln-820, and Glu-832 each coordinate ATP. Mg(2+) is bound by residues Gln-820, Glu-832, and Asn-834. Positions 820, 832, and 834 each coordinate Mn(2+). One can recognise an MGS-like domain in the interval 930 to 1059; it reads LHLPNFGNIV…ESRSFTTEAI (130 aa). The segment at 930–1059 is allosteric domain; sequence LHLPNFGNIV…ESRSFTTEAI (130 aa).

Belongs to the CarB family. Composed of two chains; the small (or glutamine) chain promotes the hydrolysis of glutamine to ammonia, which is used by the large (or ammonia) chain to synthesize carbamoyl phosphate. Tetramer of heterodimers (alpha,beta)4. Requires Mg(2+) as cofactor. It depends on Mn(2+) as a cofactor.

It carries out the reaction hydrogencarbonate + L-glutamine + 2 ATP + H2O = carbamoyl phosphate + L-glutamate + 2 ADP + phosphate + 2 H(+). The catalysed reaction is hydrogencarbonate + NH4(+) + 2 ATP = carbamoyl phosphate + 2 ADP + phosphate + 2 H(+). Its pathway is amino-acid biosynthesis; L-arginine biosynthesis; carbamoyl phosphate from bicarbonate: step 1/1. It functions in the pathway pyrimidine metabolism; UMP biosynthesis via de novo pathway; (S)-dihydroorotate from bicarbonate: step 1/3. In terms of biological role, large subunit of the glutamine-dependent carbamoyl phosphate synthetase (CPSase). CPSase catalyzes the formation of carbamoyl phosphate from the ammonia moiety of glutamine, carbonate, and phosphate donated by ATP, constituting the first step of 2 biosynthetic pathways, one leading to arginine and/or urea and the other to pyrimidine nucleotides. The large subunit (synthetase) binds the substrates ammonia (free or transferred from glutamine from the small subunit), hydrogencarbonate and ATP and carries out an ATP-coupled ligase reaction, activating hydrogencarbonate by forming carboxy phosphate which reacts with ammonia to form carbamoyl phosphate. This is Carbamoyl phosphate synthase large chain from Streptococcus sanguinis (strain SK36).